A 585-amino-acid polypeptide reads, in one-letter code: MARPDPSAPPSLLLLLLAQLVGRAAAASKAPVCQEITVPMCRGIGYNLTHMPNQFNHDTQDEAGLEVHQFWPLVEIHCSPDLRFFLCSMYTPICLPDYHKPLPPCRSVCERAKAGCSPLMRQYGFAWPERMSCDRLPVLGGDAEVLCMDYNRSEATTASPKSFPAKPTLPGPPGAPSSGGECPSGGPSVCTCREPFVPILKESHPLYNKVRTGQVPNCAVPCYQPSFSPDERTFATFWIGLWSVLCFISTSTTVATFLIDMERFRYPERPIIFLSACYLCVSLGFLVRLVVGHASVACSREHSHIHYETTGPALCTVVFLLVYFFGMASSIWWVILSLTWFLAAGMKWGNEAIAGYAQYFHLAAWLIPSVKSITALALSSVDGDPVAGICYVGNQNLNSLRGFVLGPLVLYLLVGTLFLLAGFVSLFRIRSVIKQGGTKTDKLEKLMIRIGIFTLLYTVPASIVVACYLYEQHYRESWEAALTCACPGPDAGQPRAKPEYWVLMLKYFMCLVVGITSGVWIWSGKTLESWRRFTSRCCCSSRRGHKSGGAMAAGDYAEASAALTGRTGPPGPTAAYHKQVSLSHV.

The first 26 residues, 1 to 26 (MARPDPSAPPSLLLLLLAQLVGRAAA), serve as a signal peptide directing secretion. At 27–238 (ASKAPVCQEI…PDERTFATFW (212 aa)) the chain is on the extracellular side. An FZ domain is found at 28-150 (SKAPVCQEIT…GDAEVLCMDY (123 aa)). 5 cysteine pairs are disulfide-bonded: Cys-33–Cys-94, Cys-41–Cys-87, Cys-78–Cys-116, Cys-105–Cys-147, and Cys-109–Cys-133. An N-linked (GlcNAc...) asparagine glycan is attached at Asn-47. A glycan (N-linked (GlcNAc...) asparagine) is linked at Asn-151. The disordered stretch occupies residues 156–182 (TTASPKSFPAKPTLPGPPGAPSSGGEC). The helical transmembrane segment at 239-259 (IGLWSVLCFISTSTTVATFLI) threads the bilayer. Residues 260 to 270 (DMERFRYPERP) lie on the Cytoplasmic side of the membrane. The chain crosses the membrane as a helical span at residues 271–291 (IIFLSACYLCVSLGFLVRLVV). Residues 292–315 (GHASVACSREHSHIHYETTGPALC) lie on the Extracellular side of the membrane. Residues 316–336 (TVVFLLVYFFGMASSIWWVIL) traverse the membrane as a helical segment. At 337-358 (SLTWFLAAGMKWGNEAIAGYAQ) the chain is on the cytoplasmic side. Residues 359 to 379 (YFHLAAWLIPSVKSITALALS) form a helical membrane-spanning segment. Topologically, residues 380–402 (SVDGDPVAGICYVGNQNLNSLRG) are extracellular. Residues 403 to 423 (FVLGPLVLYLLVGTLFLLAGF) traverse the membrane as a helical segment. Over 424–449 (VSLFRIRSVIKQGGTKTDKLEKLMIR) the chain is Cytoplasmic. The helical transmembrane segment at 450-470 (IGIFTLLYTVPASIVVACYLY) threads the bilayer. Over 471-500 (EQHYRESWEAALTCACPGPDAGQPRAKPEY) the chain is Extracellular. The helical transmembrane segment at 501 to 521 (WVLMLKYFMCLVVGITSGVWI) threads the bilayer. The Cytoplasmic segment spans residues 522 to 585 (WSGKTLESWR…YHKQVSLSHV (64 aa)). A PDZ-binding motif is present at residues 582-584 (LSH).

This sequence belongs to the G-protein coupled receptor Fz/Smo family. Binding of unsaturated fatty acid molecules (via FZ domain) promotes homodimerization (via FZ domain). Interacts with WNT2B. Interacts with WNT7A. Interacts with GOPC. In terms of processing, ubiquitinated by RNF43 and ZNRF3, leading to its degradation by the proteasome. As to expression, detected in hippocampus (at protein level). Expressed in eye, kidney, lung, chondrocytes, epithelial cells of the small intestine and gobelet cells of the colon.

The protein resides in the cell membrane. The protein localises to the golgi apparatus membrane. Its subcellular location is the synapse. It localises to the perikaryon. It is found in the cell projection. The protein resides in the dendrite. The protein localises to the axon. Receptor for Wnt proteins. Functions in the canonical Wnt/beta-catenin signaling pathway. In vitro activates WNT2, WNT10B, WNT5A, but not WNT2B or WNT4 signaling. In neurons, activation by WNT7A promotes formation of synapses. May be involved in transduction and intercellular transmission of polarity information during tissue morphogenesis and/or in differentiated tissues. Plays a role in yolk sac angiogenesis and in placental vascularization. Plays a role in ocular development. The polypeptide is Frizzled-5 (Fzd5) (Mus musculus (Mouse)).